We begin with the raw amino-acid sequence, 411 residues long: Serine hydroxymethyltransferase (411 aa).

(6S)-5,6,7,8-tetrahydrofolate is bound by residues L119 and 123–125 (GHL). K228 is modified (N6-(pyridoxal phosphate)lysine).

It belongs to the SHMT family. As to quaternary structure, homodimer. It depends on pyridoxal 5'-phosphate as a cofactor.

Its subcellular location is the cytoplasm. The enzyme catalyses (6R)-5,10-methylene-5,6,7,8-tetrahydrofolate + glycine + H2O = (6S)-5,6,7,8-tetrahydrofolate + L-serine. The protein operates within one-carbon metabolism; tetrahydrofolate interconversion. Its pathway is amino-acid biosynthesis; glycine biosynthesis; glycine from L-serine: step 1/1. Functionally, catalyzes the reversible interconversion of serine and glycine with tetrahydrofolate (THF) serving as the one-carbon carrier. This reaction serves as the major source of one-carbon groups required for the biosynthesis of purines, thymidylate, methionine, and other important biomolecules. Also exhibits THF-independent aldolase activity toward beta-hydroxyamino acids, producing glycine and aldehydes, via a retro-aldol mechanism. The chain is Serine hydroxymethyltransferase from Clostridium kluyveri (strain NBRC 12016).